We begin with the raw amino-acid sequence, 228 residues long: Urease accessory protein UreF (228 aa).

This sequence belongs to the UreF family. As to quaternary structure, ureD, UreF and UreG form a complex that acts as a GTP-hydrolysis-dependent molecular chaperone, activating the urease apoprotein by helping to assemble the nickel containing metallocenter of UreC. The UreE protein probably delivers the nickel.

The protein resides in the cytoplasm. Its function is as follows. Required for maturation of urease via the functional incorporation of the urease nickel metallocenter. The chain is Urease accessory protein UreF from Prochlorococcus marinus (strain MIT 9312).